The chain runs to 334 residues: SH3 and cysteine-rich domain-containing protein 3 (334 aa).

The interval 1-26 (MAQYDQLEDKDSLDIHDNPPAPENVV) is disordered. Residues 7-17 (LEDKDSLDIHD) show a composition bias toward basic and acidic residues. The Phorbol-ester/DAG-type zinc-finger motif lies at 62 to 113 (PHKFKDHYCKKPKFCDVCARMIVLNNKFALRCKNCKTNIHHSCQSYVQFQRC). Residues 178 to 190 (EEEAQQPKEDEEG) show a composition bias toward acidic residues. The disordered stretch occupies residues 178–215 (EEEAQQPKEDEEGAEGKQDGDKKDKTATDDKNKKQQQT). Basic and acidic residues predominate over residues 191–210 (AEGKQDGDKKDKTATDDKNK). SH3 domains are found at residues 217–276 (SQSH…RVRA) and 277–334 (GERV…LHEL).

As to quaternary structure, component of a calcium channel complex with CACNA1S. Expressed in muscles at the muscle triad.

It localises to the cytoplasm. The protein resides in the cell membrane. The protein localises to the sarcolemma. It is found in the T-tubule. In terms of biological role, required for normal excitation-contraction coupling in skeletal muscle and for normal muscle contraction in response to membrane depolarization. Required for normal Ca(2+) release from the sarcplasmic reticulum, which ultimately leads to muscle contraction. Probably functions via its effects on muscle calcium channels. Increases CACNA1S channel activity, in addition to its role in enhancing the expression of CACNA1S at the cell membrane. Has a redundant role in promoting the expression of the calcium channel CACNA1S at the cell membrane. The sequence is that of SH3 and cysteine-rich domain-containing protein 3 from Danio rerio (Zebrafish).